The chain runs to 443 residues: Dihydroorotate dehydrogenase (quinone), mitochondrial (443 aa).

A mitochondrion-targeting transit peptide spans 1-21; the sequence is MYQRSLFRGVAQGLKRSSVRF. A helical membrane pass occupies residues 38–54; sequence WKLLSVIGSFTAGVAIY. Residues 122–126 and Ser146 contribute to the FMN site; that span reads AGFDK. Lys126 is a binding site for substrate. A Phosphoserine modification is found at Ser168. 171–175 serves as a coordination point for substrate; sequence NRYGF. FMN contacts are provided by Asn234 and Asn264. Position 264–269 (264–269) interacts with substrate; sequence NVSSPN. The Nucleophile role is filled by Ser267. FMN is bound at residue Lys306. Substrate is bound at residue 335–336; the sequence is NT. FMN-binding positions include Gly358, Gly387, and 408 to 409; that span reads YT.

This sequence belongs to the dihydroorotate dehydrogenase family. Type 2 subfamily. It depends on FMN as a cofactor.

The protein resides in the mitochondrion inner membrane. It catalyses the reaction (S)-dihydroorotate + a quinone = orotate + a quinol. It participates in pyrimidine metabolism; UMP biosynthesis via de novo pathway; orotate from (S)-dihydroorotate (quinone route): step 1/1. In terms of biological role, in the de novo pyrimidine biosynthesis pathway, catalyzes the stereospecific oxidation of (S)-dihydroorotate to orotate with reduction of flavin and the transfer of electrons to ubiquinone, which is part of the respiratory chain. Does not use fumarate and NAD as electron acceptors. In Schizosaccharomyces pombe (strain 972 / ATCC 24843) (Fission yeast), this protein is Dihydroorotate dehydrogenase (quinone), mitochondrial (ura3).